The following is a 173-amino-acid chain: Small ribosomal subunit protein uS10m (173 aa).

This sequence belongs to the universal ribosomal protein uS10 family. Component of the mitochondrial ribosome small subunit (28S) which comprises a 12S rRNA and about 30 distinct proteins.

It localises to the mitochondrion. In Drosophila melanogaster (Fruit fly), this protein is Small ribosomal subunit protein uS10m (mRpS10).